The sequence spans 333 residues: Fructose-1,6-bisphosphatase class 1 (333 aa).

Mg(2+) contacts are provided by Glu92, Asp113, Leu115, and Asp116. Substrate contacts are provided by residues 116-119 (DGSS), Asn209, Tyr242, and Lys272. Glu278 lines the Mg(2+) pocket.

It belongs to the FBPase class 1 family. Homotetramer. Requires Mg(2+) as cofactor.

It localises to the cytoplasm. The enzyme catalyses beta-D-fructose 1,6-bisphosphate + H2O = beta-D-fructose 6-phosphate + phosphate. It participates in carbohydrate biosynthesis; Calvin cycle. The protein is Fructose-1,6-bisphosphatase class 1 of Chlorobaculum tepidum (strain ATCC 49652 / DSM 12025 / NBRC 103806 / TLS) (Chlorobium tepidum).